The sequence spans 449 residues: MELDNSHLVLGLGATGLSVVRYLCRQGITPLVMDSRDQPPGAEQLALEFPEVNLITGGFDCRYLVQASQIVISPGIAIDTPEIRAAIDMDIEVIGDVELFARAIKDRSPCVIGITGSNGKSTVTTLVGEMAKAAGLNYAVGGNIGIPVLDLLQKPVDLYILELSSFQLETTHSLNCISATCLNISEDHMDRYSDLEAYRQAKLALYDQSKRALFNREDSLTQPNDPMNQNSFGLTSPVNDEWGVKDGKIVHGTTEIASLQDVAIVGSHNHANLIAAMALAYHAGIDKEPMIQVAKNFTGLAHRCELVANIAAVAYVNDSKATNVGATVAALEGLGEHLGDIILIVGGDGKGADFTPLETVFNKVAHLITLGKDGDKIAALKEHSHKADSMADAVKQAAELATAGDIVLLSPACASLDMYKNFMARGDDFRQLAQALSVETLDSEASADV.

116–122 (GSNGKST) is a binding site for ATP.

The protein belongs to the MurCDEF family.

It is found in the cytoplasm. The catalysed reaction is UDP-N-acetyl-alpha-D-muramoyl-L-alanine + D-glutamate + ATP = UDP-N-acetyl-alpha-D-muramoyl-L-alanyl-D-glutamate + ADP + phosphate + H(+). The protein operates within cell wall biogenesis; peptidoglycan biosynthesis. In terms of biological role, cell wall formation. Catalyzes the addition of glutamate to the nucleotide precursor UDP-N-acetylmuramoyl-L-alanine (UMA). The chain is UDP-N-acetylmuramoylalanine--D-glutamate ligase from Shewanella violacea (strain JCM 10179 / CIP 106290 / LMG 19151 / DSS12).